The sequence spans 675 residues: Collagen alpha-3(IX) chain (675 aa).

The N-terminal stretch at 1 to 21 (MTVFPTLGLLFLCQLLATTSA) is a signal peptide. 2 disordered regions span residues 22 to 517 (QRVG…KEAS) and 542 to 660 (KPLS…ICDT). Positions 25–515 (GPQGPPGPRG…TGKPGPPGKE (491 aa)) are triple-helical region 3 (COL3). Pro residues-rich tracts occupy residues 27-38 (QGPPGPRGPPGP) and 51-60 (SGLPGPPGPK). Residues 62–87 (APGKPGAAGEAGLPGLPGVDGLTGTD) show a composition bias toward low complexity. Positions 105–125 (AGPPGPAGKGLPGPPGPPGPS) are enriched in pro residues. Residues 126–135 (GLPGGNGFRG) show a composition bias toward gly residues. Composition is skewed to pro residues over residues 136–155 (PPGPSGLPGFPGPPGPPGPP) and 173–184 (LCPPGPPGPPGM). The segment covering 218-233 (PGSVGLQGPRGLRGLP) has biased composition (low complexity). The Cell attachment site motif lies at 242 to 244 (RGD). Residues 301-317 (KDGRDGAPGLDGEKGDA) are compositionally biased toward basic and acidic residues. Residues 361–374 (EPGIPGDVGIPGDR) show a composition bias toward low complexity. An N-linked (GlcNAc...) asparagine glycan is attached at N479. Over residues 481 to 508 (TAGAPGIPGHPGPMGHQGEQGVPGITGK) the composition is skewed to low complexity. The nonhelical region 3 (NC3) stretch occupies residues 516-546 (ASEQHIRELCGEMINDQIAQLAANLRKPLSP). Residues 547 to 626 (GMTGRPGPAG…QGLPGVPGIS (80 aa)) form a triple-helical region 2 (COL2) region. Low complexity predominate over residues 569–582 (HPGARGPPGYRGPT). The short motif at 591–593 (RGD) is the Cell attachment site element. Residues 613 to 624 (DQGPQGLPGVPG) show a composition bias toward low complexity. A nonhelical region 2 (NC2) region spans residues 627–631 (KNGRD). The tract at residues 632 to 658 (GAQGEPGLPGDPGTPGAVGAQGTPGIC) is triple-helical region 1 (COL1). The nonhelical region 1 (NC1) stretch occupies residues 659–675 (DTSACMGAVGASTSKKS).

It belongs to the fibril-associated collagens with interrupted helices (FACIT) family. Trimers composed of three different chains: alpha 1(IX), alpha 2(IX), and alpha 3(IX). Post-translationally, prolines at the third position of the tripeptide repeating unit (G-X-Y) are hydroxylated in some or all of the chains.

The protein localises to the secreted. It is found in the extracellular space. It localises to the extracellular matrix. Collagen type IX is a minor cartilage non-fibrillar collagen. It is associated with type II collagen fibrils. The protein is Collagen alpha-3(IX) chain (COL9A3) of Gallus gallus (Chicken).